The chain runs to 424 residues: Chitinase CLP (424 aa).

Residues 1 to 18 (MSLHLLLAVSLCVALASS) form the signal peptide. The region spanning 43 to 405 (AATSLYTVPI…DEEKQRLGFS (363 aa)) is the Peptidase A1 domain. Asparagine 139, asparagine 345, and asparagine 419 each carry an N-linked (GlcNAc...) asparagine glycan.

It belongs to the peptidase A1 family. Expressed in roots. Expressed at low levels in leaf sheaths, stems and flowers.

It localises to the secreted. It is found in the extracellular space. The protein localises to the apoplast. The catalysed reaction is Random endo-hydrolysis of N-acetyl-beta-D-glucosaminide (1-&gt;4)-beta-linkages in chitin and chitodextrins.. Its function is as follows. Chitinase that possesses antifungal activity. Inhibits the growth of the fungal pathogen Rhizoctonia solani by degrading the fungal cell wall. Does not possess inhibiting activity against fungal endo-1,4-beta-D-xylanases belonging to glycoside hydrolase family 10 (GH10) and family 11 (GH11). Involved in the regulation of plant growth by regulating the intracellular calcium ion concentration in roots. This chain is Chitinase CLP, found in Oryza sativa subsp. japonica (Rice).